A 91-amino-acid chain; its full sequence is DNA-directed RNA polymerase subunit omega (91 aa).

The protein belongs to the RNA polymerase subunit omega family. The RNAP catalytic core consists of 2 alpha, 1 beta, 1 beta' and 1 omega subunit. When a sigma factor is associated with the core the holoenzyme is formed, which can initiate transcription.

The enzyme catalyses RNA(n) + a ribonucleoside 5'-triphosphate = RNA(n+1) + diphosphate. Functionally, promotes RNA polymerase assembly. Latches the N- and C-terminal regions of the beta' subunit thereby facilitating its interaction with the beta and alpha subunits. The polypeptide is DNA-directed RNA polymerase subunit omega (Aeromonas hydrophila subsp. hydrophila (strain ATCC 7966 / DSM 30187 / BCRC 13018 / CCUG 14551 / JCM 1027 / KCTC 2358 / NCIMB 9240 / NCTC 8049)).